Reading from the N-terminus, the 381-residue chain is Anti-sigma-I factor RsgI (381 aa).

The Cytoplasmic portion of the chain corresponds to 1–63 (MRRGIIVEKN…FDFFKLRPFK (63 aa)). In terms of domain architecture, RsgI N-terminal anti-sigma spans 2-50 (RRGIIVEKNKKFVTLLTPDGQFLKAKNDRHSYEIGEEIMLPSETRMGRR). Residues 64 to 84 (MGIFTMTAIMLFIFIVLPVFS) form a helical membrane-spanning segment. Residues 85–381 (NNKAYAYMTI…NEDSPSAPGE (297 aa)) lie on the Extracellular side of the membrane. The segment at 198-381 (SDMQTREKAK…NEDSPSAPGE (184 aa)) is disordered. 4 stretches are compositionally biased toward basic and acidic residues: residues 200–210 (MQTREKAKKEG), 219–244 (SNEK…QKSD), 273–321 (GDQK…DKGN), and 349–359 (SRRDNASDRRN).

Interacts (via RsgI N-terminal anti-sigma domain) with SigI.

It localises to the cell membrane. Anti-sigma factor for SigI. Negatively regulates SigI activity through direct interaction. The polypeptide is Anti-sigma-I factor RsgI (Bacillus subtilis (strain 168)).